Reading from the N-terminus, the 212-residue chain is Cell division protein YtfB (212 aa).

The helical transmembrane segment at 34–50 threads the bilayer; sequence GIIIAAIVLVVGFLLPS. The disordered stretch occupies residues 88–127; that stretch reads NDPDQVAPVAPEPIQEGQPEEQPQTTQTQPFQPDSGIDNQ. Residues 99–120 show a composition bias toward low complexity; the sequence is EPIQEGQPEEQPQTTQTQPFQP. Residues 117–212 are oapA; the sequence is PFQPDSGIDN…QPDGSFIRAR (96 aa).

This sequence belongs to the OapA family.

The protein localises to the cell inner membrane. Functionally, cell division protein whose function is related to the generation of a transient cell wall structure. Function is linked to the late stages of cell division. The sequence is that of Cell division protein YtfB (ytfB) from Escherichia coli (strain K12).